The primary structure comprises 501 residues: Probable cytochrome P450 6t3 (501 aa).

Cys-444 provides a ligand contact to heme.

Belongs to the cytochrome P450 family. Heme serves as cofactor.

It is found in the endoplasmic reticulum membrane. The protein resides in the microsome membrane. Its function is as follows. May be involved in the metabolism of insect hormones and in the breakdown of synthetic insecticides. This Drosophila melanogaster (Fruit fly) protein is Probable cytochrome P450 6t3 (Cyp6t3).